The following is a 678-amino-acid chain: Exoribonuclease 2 (678 aa).

The region spanning 193–521 (REDLTALPFV…INHRLLKAHI (329 aa)) is the RNB domain. One can recognise an S1 motif domain in the interval 568–650 (ETRFQAEIFD…ENRSLVGKPT (83 aa)). The segment at 658–678 (SETQTSTEQPAEGAENNEPQA) is disordered.

The protein belongs to the RNR ribonuclease family. RNase II subfamily.

The protein localises to the cytoplasm. The catalysed reaction is Exonucleolytic cleavage in the 3'- to 5'-direction to yield nucleoside 5'-phosphates.. Involved in mRNA degradation. Hydrolyzes single-stranded polyribonucleotides processively in the 3' to 5' direction. This is Exoribonuclease 2 from Vibrio cholerae serotype O1 (strain ATCC 39541 / Classical Ogawa 395 / O395).